A 522-amino-acid polypeptide reads, in one-letter code: Berberine bridge enzyme-like Cyn d 4 (522 aa).

Residues 1-25 (MARSRAFAFALLICAVAASCHVALS) form the signal peptide. C41 and C98 are oxidised to a cystine. The FAD-binding PCMH-type domain occupies 76–252 (KTVKPLYIIT…ASWQVKLLPV (177 aa)). N88 carries an N-linked (GlcNAc...) asparagine glycan. FAD contacts are provided by residues 108-114 (VRSGGHD), S119, S152, 176-177 (VC), 181-185 (GVGGH), F191, E237, and V242. A cross-link (6-(S-cysteinyl)-8alpha-(pros-histidyl)-FAD (His-Cys)) is located at residues 113–177 (HDYEGLSYRS…PKLGFPAGVC (65 aa)). C308 and C329 form a disulfide bridge. 2 N-linked (GlcNAc...) asparagine glycosylation sites follow: N325 and N354. FAD is bound at residue 461-465 (YVNYR). N477 carries N-linked (GlcNAc...) asparagine glycosylation.

It belongs to the oxygen-dependent FAD-linked oxidoreductase family. In terms of assembly, monomer. Requires FAD as cofactor. In terms of processing, the FAD cofactor is bound via a bicovalent 6-S-cysteinyl, 8alpha-N1-histidyl FAD linkage. The N-terminus is blocked. Post-translationally, glycosylated. N-glycosylated. Contains fucose, N-acetylglucosamine, and mannose as main carbohydrates (in a ratio of approximately 3:2:1), and a minute amount of xylose. The two most abundant oligosaccharides are Fuc(1)GlcNAc(2)Man(3) and Fuc(1)GlcNAc(2)Man(2), together comprising about 80% of the total carbohydrate content. They are structurally unusual in having a L-Fuc alpha-(1,3)-linked to Asn-linked GlcNAc without a Xyl beta-(1,2)-linked to the branching Man. The other oligosaccharides make up only 9% of the total carbohydrate content and are characterized by the presence of Xyl beta-(1,2)-linked to the branching Man. As to expression, expressed in pollen (at protein level).

The protein is Berberine bridge enzyme-like Cyn d 4 of Cynodon dactylon (Bermuda grass).